The primary structure comprises 154 residues: MGLSEAEWQLVLHVWAKVEADLSGHGQEILIRLFKGHPETLEKFDKFKHLKSEAEMKASEDLKKHGHTVLTALGGILKKKGHHEAELKPLAQSHATKHKIPIKYLEFISDAIIHVLHSKHPSDFGADAQAAMTKALELFRKDIAAKYKELGFHG.

The Globin domain occupies 2-148 (GLSEAEWQLV…FRKDIAAKYK (147 aa)). The residue at position 4 (Ser-4) is a Phosphoserine. His-65 provides a ligand contact to nitrite. His-65 contributes to the O2 binding site. Thr-68 is subject to Phosphothreonine. His-94 is a binding site for heme b.

This sequence belongs to the globin family. Monomeric.

The protein localises to the cytoplasm. It is found in the sarcoplasm. It carries out the reaction Fe(III)-heme b-[protein] + nitric oxide + H2O = Fe(II)-heme b-[protein] + nitrite + 2 H(+). It catalyses the reaction H2O2 + AH2 = A + 2 H2O. In terms of biological role, monomeric heme protein which primary function is to store oxygen and facilitate its diffusion within muscle tissues. Reversibly binds oxygen through a pentacoordinated heme iron and enables its timely and efficient release as needed during periods of heightened demand. Depending on the oxidative conditions of tissues and cells, and in addition to its ability to bind oxygen, it also has a nitrite reductase activity whereby it regulates the production of bioactive nitric oxide. Under stress conditions, like hypoxia and anoxia, it also protects cells against reactive oxygen species thanks to its pseudoperoxidase activity. The sequence is that of Myoglobin (MB) from Indopacetus pacificus (Longman's beaked whale).